A 209-amino-acid polypeptide reads, in one-letter code: Pyridoxal 5'-phosphate synthase subunit PdxT (209 aa).

An L-glutamine-binding site is contributed by glycine 58–serine 60. Cysteine 90 acts as the Nucleophile in catalysis. L-glutamine contacts are provided by residues arginine 119 and isoleucine 148–arginine 149. Residues histidine 185 and glutamate 187 each act as charge relay system in the active site.

It belongs to the glutaminase PdxT/SNO family. As to quaternary structure, in the presence of PdxS, forms a dodecamer of heterodimers. Only shows activity in the heterodimer.

It catalyses the reaction aldehydo-D-ribose 5-phosphate + D-glyceraldehyde 3-phosphate + L-glutamine = pyridoxal 5'-phosphate + L-glutamate + phosphate + 3 H2O + H(+). It carries out the reaction L-glutamine + H2O = L-glutamate + NH4(+). It participates in cofactor biosynthesis; pyridoxal 5'-phosphate biosynthesis. Functionally, catalyzes the hydrolysis of glutamine to glutamate and ammonia as part of the biosynthesis of pyridoxal 5'-phosphate. The resulting ammonia molecule is channeled to the active site of PdxS. This is Pyridoxal 5'-phosphate synthase subunit PdxT from Clavibacter michiganensis subsp. michiganensis (strain NCPPB 382).